The following is a 144-amino-acid chain: 3-hydroxyacyl-[acyl-carrier-protein] dehydratase FabZ (144 aa).

Residue His51 is part of the active site.

Belongs to the thioester dehydratase family. FabZ subfamily.

The protein resides in the cytoplasm. It carries out the reaction a (3R)-hydroxyacyl-[ACP] = a (2E)-enoyl-[ACP] + H2O. Functionally, involved in unsaturated fatty acids biosynthesis. Catalyzes the dehydration of short chain beta-hydroxyacyl-ACPs and long chain saturated and unsaturated beta-hydroxyacyl-ACPs. In Lactococcus lactis subsp. cremoris (strain MG1363), this protein is 3-hydroxyacyl-[acyl-carrier-protein] dehydratase FabZ.